Here is a 352-residue protein sequence, read N- to C-terminus: Nicotinate-nucleotide--dimethylbenzimidazole phosphoribosyltransferase (352 aa).

The active-site Proton acceptor is the E318.

It belongs to the CobT family.

It catalyses the reaction 5,6-dimethylbenzimidazole + nicotinate beta-D-ribonucleotide = alpha-ribazole 5'-phosphate + nicotinate + H(+). It participates in nucleoside biosynthesis; alpha-ribazole biosynthesis; alpha-ribazole from 5,6-dimethylbenzimidazole: step 1/2. In terms of biological role, catalyzes the synthesis of alpha-ribazole-5'-phosphate from nicotinate mononucleotide (NAMN) and 5,6-dimethylbenzimidazole (DMB). The sequence is that of Nicotinate-nucleotide--dimethylbenzimidazole phosphoribosyltransferase from Azotobacter vinelandii (strain DJ / ATCC BAA-1303).